The sequence spans 141 residues: Ribonuclease P protein component (141 aa).

Disordered regions lie at residues 37–56 (RTEE…VGFT) and 114–141 (RRIT…VNGK). A compositionally biased stretch (basic and acidic residues) spans 114–124 (RRITAKGERRS).

Belongs to the RnpA family. Consists of a catalytic RNA component (M1 or rnpB) and a protein subunit.

It catalyses the reaction Endonucleolytic cleavage of RNA, removing 5'-extranucleotides from tRNA precursor.. In terms of biological role, RNaseP catalyzes the removal of the 5'-leader sequence from pre-tRNA to produce the mature 5'-terminus. It can also cleave other RNA substrates such as 4.5S RNA. The protein component plays an auxiliary but essential role in vivo by binding to the 5'-leader sequence and broadening the substrate specificity of the ribozyme. This is Ribonuclease P protein component from Brucella melitensis biotype 2 (strain ATCC 23457).